The chain runs to 253 residues: HTH-type transcriptional repressor DasR (253 aa).

Residues 16–86 (RAQRVPKYYR…QGKGTFVAKP (71 aa)) enclose the HTH gntR-type domain. The H-T-H motif DNA-binding region spans 46-65 (ERTLAAEFDTSRTTVPQALQ).

The protein resides in the cytoplasm. In terms of biological role, global regulator that is part of the nutrient-sensing system. In the absence of glucosamine 6-P (GlcN6P), represses the phosphotransferase system (PTS) specific for the uptake of N-acetylglucosamine (PTSNag), and genes involved in the metabolism of chitin, as well as several genes involved in development, thereby linking carbon availability to morphogenesis. Regulates the dasABC transport operon involved in glucose-related morphogenesis. Essential for development. This is HTH-type transcriptional repressor DasR (dasR) from Streptomyces griseus.